Reading from the N-terminus, the 411-residue chain is CinA-like protein (411 aa).

This sequence belongs to the CinA family.

This is CinA-like protein from Dictyoglomus turgidum (strain DSM 6724 / Z-1310).